Here is a 63-residue protein sequence, read N- to C-terminus: Small ribosomal subunit protein uS14 (63 aa).

Zn(2+) contacts are provided by cysteine 26, cysteine 29, cysteine 42, and cysteine 45.

Belongs to the universal ribosomal protein uS14 family. Zinc-binding uS14 subfamily. In terms of assembly, part of the 30S ribosomal subunit. Contacts proteins S3 and S10. Zn(2+) serves as cofactor.

Binds 16S rRNA, required for the assembly of 30S particles and may also be responsible for determining the conformation of the 16S rRNA at the A site. This chain is Small ribosomal subunit protein uS14, found in Gloeobacter violaceus (strain ATCC 29082 / PCC 7421).